The following is a 144-amino-acid chain: Interleukin-9 (144 aa).

A signal peptide spans 1–18 (MLLAMVLTSALLLCSVAG). The residue at position 19 (Q19) is a Pyrrolidone carboxylic acid. N-linked (GlcNAc...) asparagine glycans are attached at residues N50, N63, N78, and N114.

This sequence belongs to the IL-7/IL-9 family. As to quaternary structure, interacts with IL9R. Interacts with IL2RG.

It is found in the secreted. Functionally, multifunctional cytokine secreted mainly by T-helper 2 lymphocytes and also mast cells or NKT cells that plays important roles in the immune response against parasites. Affects intestinal epithelial permeability and adaptive immunity. In addition, induces the differentiation of specific T-cell subsets such as IL-17 producing helper T-cells (TH17) and also proliferation and differentiation of mast cells. Mechanistically, exerts its biological effects through a receptor composed of IL9R subunit and a signal transducing subunit IL2RG. Receptor stimulation results in the rapid activation of JAK1 and JAK3 kinase activities leading to STAT1, STAT3 and STAT5-mediated transcriptional programs. Induction of differentiation genes seems to be mediated by STAT1 alone, while protection of cells from apoptosis depends on STAT3 and STAT5. This is Interleukin-9 (IL9) from Homo sapiens (Human).